A 750-amino-acid chain; its full sequence is Polyribonucleotide nucleotidyltransferase (750 aa).

Positions 489 and 495 each coordinate Mg(2+). The KH domain occupies 556–620 (PKMITRRIPN…EGIDKVIAKI (65 aa)). The S1 motif domain maps to 630 to 701 (GSVYEVKVIK…KTRKDKVSRK (72 aa)). The tract at residues 697–750 (KVSRKALMEKPEGYKERAPRDRDDKRGSRDNNRGRDNRGRDNRRDDRKPRENKD) is disordered. The span at 702 to 750 (ALMEKPEGYKERAPRDRDDKRGSRDNNRGRDNRGRDNRRDDRKPRENKD) shows a compositional bias: basic and acidic residues.

The protein belongs to the polyribonucleotide nucleotidyltransferase family. Mg(2+) is required as a cofactor.

Its subcellular location is the cytoplasm. It carries out the reaction RNA(n+1) + phosphate = RNA(n) + a ribonucleoside 5'-diphosphate. In terms of biological role, involved in mRNA degradation. Catalyzes the phosphorolysis of single-stranded polyribonucleotides processively in the 3'- to 5'-direction. The polypeptide is Polyribonucleotide nucleotidyltransferase (Christiangramia forsetii (strain DSM 17595 / CGMCC 1.15422 / KT0803) (Gramella forsetii)).